A 470-amino-acid polypeptide reads, in one-letter code: ATP synthase subunit beta (470 aa).

Residue 158–165 (GGAGVGKT) coordinates ATP.

The protein belongs to the ATPase alpha/beta chains family. As to quaternary structure, F-type ATPases have 2 components, CF(1) - the catalytic core - and CF(0) - the membrane proton channel. CF(1) has five subunits: alpha(3), beta(3), gamma(1), delta(1), epsilon(1). CF(0) has three main subunits: a(1), b(2) and c(9-12). The alpha and beta chains form an alternating ring which encloses part of the gamma chain. CF(1) is attached to CF(0) by a central stalk formed by the gamma and epsilon chains, while a peripheral stalk is formed by the delta and b chains.

The protein resides in the cell membrane. It catalyses the reaction ATP + H2O + 4 H(+)(in) = ADP + phosphate + 5 H(+)(out). Produces ATP from ADP in the presence of a proton gradient across the membrane. The catalytic sites are hosted primarily by the beta subunits. The sequence is that of ATP synthase subunit beta from Alkalihalophilus pseudofirmus (strain ATCC BAA-2126 / JCM 17055 / OF4) (Bacillus pseudofirmus).